We begin with the raw amino-acid sequence, 876 residues long: Exonuclease mut-7 homolog (876 aa).

A 3'-5' exonuclease domain is found at 517 to 571 (GLSLLVQQVLGTALDKTQQLSNWDRRPLCEEQVIYAAADAYCLLEVHQALCREPA). Disordered regions lie at residues 578–607 (DLAG…APAA) and 751–781 (SHQE…AAPE).

The protein belongs to the mut-7 family. Mg(2+) is required as a cofactor.

In terms of biological role, possesses 3'-5' exoribonuclease activity. Required for 3'-end trimming of AGO1-bound miRNAs. In Homo sapiens (Human), this protein is Exonuclease mut-7 homolog (EXD3).